A 199-amino-acid chain; its full sequence is Imidazoleglycerol-phosphate dehydratase (199 aa).

Belongs to the imidazoleglycerol-phosphate dehydratase family.

The protein localises to the cytoplasm. It carries out the reaction D-erythro-1-(imidazol-4-yl)glycerol 3-phosphate = 3-(imidazol-4-yl)-2-oxopropyl phosphate + H2O. Its pathway is amino-acid biosynthesis; L-histidine biosynthesis; L-histidine from 5-phospho-alpha-D-ribose 1-diphosphate: step 6/9. The sequence is that of Imidazoleglycerol-phosphate dehydratase from Paramagnetospirillum magneticum (strain ATCC 700264 / AMB-1) (Magnetospirillum magneticum).